A 115-amino-acid chain; its full sequence is Pro-neuregulin-4, membrane-bound isoform (115 aa).

Topologically, residues 1-62 (MPTDHEQPCG…SSIPSESNLS (62 aa)) are extracellular. The 42-residue stretch at 5–46 (HEQPCGPRHRSFCLNGGICYVIPTIPSPFCRCIENYTGARCE) folds into the EGF-like domain. Disulfide bonds link C9-C23, C17-C34, and C36-C45. N39 and N60 each carry an N-linked (GlcNAc...) asparagine glycan. The chain crosses the membrane as a helical span at residues 63–83 (AAFVVLAVLLTLTIAALCFLC). Residues 84-115 (RKGHLQRASSVQCEISLVETNNTRTRHSHREH) lie on the Cytoplasmic side of the membrane.

It belongs to the neuregulin family. In terms of assembly, interacts with ERBB4. In terms of processing, proteolytic cleavage close to the plasma membrane on the external face leads to the release of the soluble growth factor form. Extensive glycosylation precedes the proteolytic cleavage. Highly expressed in pancreas; weakly expressed in muscle.

Its subcellular location is the cell membrane. The protein localises to the secreted. Low affinity ligand for the ERBB4 tyrosine kinase receptor. Concomitantly recruits ERBB1 and ERBB2 coreceptors, resulting in ligand-stimulated tyrosine phosphorylation and activation of the ERBB receptors. Does not bind to the ERBB1, ERBB2 and ERBB3 receptors. This is Pro-neuregulin-4, membrane-bound isoform (Nrg4) from Mus musculus (Mouse).